Here is a 171-residue protein sequence, read N- to C-terminus: Adenine phosphoribosyltransferase (171 aa).

This sequence belongs to the purine/pyrimidine phosphoribosyltransferase family. As to quaternary structure, homodimer.

The protein localises to the cytoplasm. The catalysed reaction is AMP + diphosphate = 5-phospho-alpha-D-ribose 1-diphosphate + adenine. Its pathway is purine metabolism; AMP biosynthesis via salvage pathway; AMP from adenine: step 1/1. Catalyzes a salvage reaction resulting in the formation of AMP, that is energically less costly than de novo synthesis. In Mesomycoplasma hyopneumoniae (strain 232) (Mycoplasma hyopneumoniae), this protein is Adenine phosphoribosyltransferase.